The sequence spans 80 residues: uncharacterized protein (80 aa).

The next 3 membrane-spanning stretches (helical) occupy residues 2–22 (INLW…IGQV), 32–52 (FFGM…LTGG), and 55–75 (LVTG…RFMV).

The protein localises to the cell membrane. This is an uncharacterized protein from Escherichia coli (strain K12).